The chain runs to 233 residues: Probable F-box protein At3g56670 (233 aa).

The F-box domain occupies 22–69 (HGGVIDIPLNTDSGVTKNTPGEIALLRFKSVSKLWSSIISSRRDFIES).

The protein is Probable F-box protein At3g56670 of Arabidopsis thaliana (Mouse-ear cress).